A 591-amino-acid polypeptide reads, in one-letter code: Aspartate--tRNA(Asp/Asn) ligase (591 aa).

Glutamate 170 is a binding site for L-aspartate. Residues 194 to 197 (QLFK) form an aspartate region. L-aspartate is bound at residue arginine 216. Residues 216-218 (RDE) and glutamine 225 contribute to the ATP site. An L-aspartate-binding site is contributed by histidine 448. Glutamate 482 is a binding site for ATP. Arginine 489 lines the L-aspartate pocket. 534–537 (GWDR) contacts ATP. The disordered stretch occupies residues 559 to 591 (GGVDPLTDAPAPITEQQRKESGIDVKPEPSKPH). Basic and acidic residues predominate over residues 574–591 (QQRKESGIDVKPEPSKPH).

This sequence belongs to the class-II aminoacyl-tRNA synthetase family. Type 1 subfamily. As to quaternary structure, homodimer.

Its subcellular location is the cytoplasm. It carries out the reaction tRNA(Asx) + L-aspartate + ATP = L-aspartyl-tRNA(Asx) + AMP + diphosphate. Aspartyl-tRNA synthetase with relaxed tRNA specificity since it is able to aspartylate not only its cognate tRNA(Asp) but also tRNA(Asn). Reaction proceeds in two steps: L-aspartate is first activated by ATP to form Asp-AMP and then transferred to the acceptor end of tRNA(Asp/Asn). This Mycobacterium avium (strain 104) protein is Aspartate--tRNA(Asp/Asn) ligase.